A 194-amino-acid chain; its full sequence is Peptidyl-tRNA hydrolase (194 aa).

Tyr-16 serves as a coordination point for tRNA. The active-site Proton acceptor is His-21. The tRNA site is built by Phe-67, Asn-69, and Asn-115.

It belongs to the PTH family. Monomer.

The protein resides in the cytoplasm. The catalysed reaction is an N-acyl-L-alpha-aminoacyl-tRNA + H2O = an N-acyl-L-amino acid + a tRNA + H(+). Its function is as follows. Hydrolyzes ribosome-free peptidyl-tRNAs (with 1 or more amino acids incorporated), which drop off the ribosome during protein synthesis, or as a result of ribosome stalling. In terms of biological role, catalyzes the release of premature peptidyl moieties from peptidyl-tRNA molecules trapped in stalled 50S ribosomal subunits, and thus maintains levels of free tRNAs and 50S ribosomes. In Escherichia fergusonii (strain ATCC 35469 / DSM 13698 / CCUG 18766 / IAM 14443 / JCM 21226 / LMG 7866 / NBRC 102419 / NCTC 12128 / CDC 0568-73), this protein is Peptidyl-tRNA hydrolase.